The chain runs to 315 residues: Aspartate carbamoyltransferase catalytic subunit (315 aa).

Residues arginine 64 and threonine 65 each contribute to the carbamoyl phosphate site. Residue lysine 92 coordinates L-aspartate. Residues arginine 114, histidine 142, and glutamine 145 each coordinate carbamoyl phosphate. L-aspartate contacts are provided by arginine 175 and arginine 229. Residues glycine 270 and proline 271 each coordinate carbamoyl phosphate.

Belongs to the aspartate/ornithine carbamoyltransferase superfamily. ATCase family. As to quaternary structure, heterododecamer (2C3:3R2) of six catalytic PyrB chains organized as two trimers (C3), and six regulatory PyrI chains organized as three dimers (R2).

The catalysed reaction is carbamoyl phosphate + L-aspartate = N-carbamoyl-L-aspartate + phosphate + H(+). The protein operates within pyrimidine metabolism; UMP biosynthesis via de novo pathway; (S)-dihydroorotate from bicarbonate: step 2/3. Catalyzes the condensation of carbamoyl phosphate and aspartate to form carbamoyl aspartate and inorganic phosphate, the committed step in the de novo pyrimidine nucleotide biosynthesis pathway. In Bradyrhizobium diazoefficiens (strain JCM 10833 / BCRC 13528 / IAM 13628 / NBRC 14792 / USDA 110), this protein is Aspartate carbamoyltransferase catalytic subunit.